The primary structure comprises 218 residues: MEPGFWHEKWQQQQIGFHQQDVNPFLVTYWHQLALPADAKIFVPLCGKSLDMCFLAEQGHQVIGCELNELAVQQFFSDNQLPMQQSAEGEHQHYQTEQISLYQGDIFTLPQSITAEVSGFYDRAALIAWPESMRAQYAKQLAYLLPQGSVGLLVTLDYPQEVLSGPPFAVSPTWVETHLSEDFEIQPLACQDVLADNPRFVKKAVPWLNEAVYLLKRR.

4 residues coordinate S-adenosyl-L-methionine: Trp10, Leu45, Glu66, and Arg123.

It belongs to the class I-like SAM-binding methyltransferase superfamily. TPMT family.

Its subcellular location is the cytoplasm. The catalysed reaction is S-adenosyl-L-methionine + a thiopurine = S-adenosyl-L-homocysteine + a thiopurine S-methylether.. This is Thiopurine S-methyltransferase from Shewanella oneidensis (strain ATCC 700550 / JCM 31522 / CIP 106686 / LMG 19005 / NCIMB 14063 / MR-1).